Consider the following 282-residue polypeptide: Probable methylxanthine N7-demethylase NdmC (282 aa).

It carries out the reaction 7-methylxanthine + NADPH + O2 + H(+) = xanthine + formaldehyde + NADP(+) + H2O. The enzyme catalyses 7-methylxanthine + NADH + O2 + H(+) = xanthine + formaldehyde + NAD(+) + H2O. Functionally, involved in the caffeine degradation, which is the essential first step for assimilating the carbon and nitrogen in caffeine. Probably catalyzes the N7-demethylation of 7-methylxanthine to produce xanthine and formaldehyde. The sequence is that of Probable methylxanthine N7-demethylase NdmC from Pseudomonas sp. (strain TJI-51).